The sequence spans 691 residues: UvrABC system protein C (691 aa).

Residues Ser-20 to Ile-97 enclose the GIY-YIG domain. The UVR domain occupies Asp-204–Ile-239. Residues Arg-662–Asp-691 are disordered. Positions Val-668 to Gln-680 are enriched in basic and acidic residues.

Belongs to the UvrC family. Interacts with UvrB in an incision complex.

It is found in the cytoplasm. Functionally, the UvrABC repair system catalyzes the recognition and processing of DNA lesions. UvrC both incises the 5' and 3' sides of the lesion. The N-terminal half is responsible for the 3' incision and the C-terminal half is responsible for the 5' incision. The chain is UvrABC system protein C from Treponema pallidum (strain Nichols).